We begin with the raw amino-acid sequence, 1001 residues long: DNA topoisomerase 3-alpha (1001 aa).

Residues 35-179 (KVLCVAEKND…NLQVLRARFS (145 aa)) enclose the Toprim domain. The Topo IA-type catalytic domain occupies 197–617 (DQRVSDAVDV…QQVQKYKQVF (421 aa)). Y362 serves as the catalytic O-(5'-phospho-DNA)-tyrosine intermediate. The interval 400–424 (GGPTPRNGNKSDQAHPPIHPTKYTN) is disordered. A C4-type zinc finger spans residues 658–685 (CPQCNKDMVLKTKKNGGFYLSCMGFPEC). Over residues 774–792 (RMDNSQHPQPADSRQTGSS) the composition is skewed to polar residues. The disordered stretch occupies residues 774-810 (RMDNSQHPQPADSRQTGSSKALAQTLPPPTAAGESNS). C813, C815, C838, C843, C897, C899, C922, and C930 together coordinate Zn(2+). 2 consecutive GRF-type zinc fingers follow at residues 813-852 (CNCG…ADSP) and 897-939 (CLCS…VDEN). A disordered region spans residues 937-1001 (DENTAPGTSG…HTRPFCPQNR (65 aa)). The segment covering 953-964 (DRGRTLESEARS) has biased composition (basic and acidic residues).

It belongs to the type IA topoisomerase family. As to quaternary structure, binds ssDNA. Interacts (via N-terminal region) with BLM; the interaction is direct. Directly interacts with RMI1. Component of the RMI complex, containing at least TOP3A, RMI1 and RMI2. The RMI complex interacts with BLM. Mg(2+) serves as cofactor. High expression is found in testis, heart, skeletal muscle and pancreas.

It is found in the mitochondrion matrix. It catalyses the reaction ATP-independent breakage of single-stranded DNA, followed by passage and rejoining.. Functionally, releases the supercoiling and torsional tension of DNA introduced during the DNA replication and transcription by transiently cleaving and rejoining one strand of the DNA duplex. Introduces a single-strand break via transesterification at a target site in duplex DNA. The scissile phosphodiester is attacked by the catalytic tyrosine of the enzyme, resulting in the formation of a DNA-(5'-phosphotyrosyl)-enzyme intermediate and the expulsion of a 3'-OH DNA strand. The free DNA strand then undergoes passage around the unbroken strand thus removing DNA supercoils. Finally, in the religation step, the DNA 3'-OH attacks the covalent intermediate to expel the active-site tyrosine and restore the DNA phosphodiester backbone. As an essential component of the RMI complex it is involved in chromosome separation and the processing of homologous recombination intermediates to limit DNA crossover formation in cells. Has DNA decatenation activity. It is required for mtDNA decatenation and segregation after completion of replication, in a process that does not require BLM, RMI1 and RMI2. The chain is DNA topoisomerase 3-alpha (TOP3A) from Homo sapiens (Human).